The primary structure comprises 1487 residues: MASQRSDFAPDLYDFIESNDFGEDPLIRAASAAEEGFTQPAAPDLLYGSQNMFGVDDAPLSTPVVVIPPPSPAPEPRGGKAKRSPSAAGSGGPPTPAAAAQPASPAPSPAPGLAAMLKMVHSSVAPGNGRRATGSSSPGGGDAADPVALDSDTETCPGSPQPEFPSSASPGGGSPAPRVRSISISSSSSSSSSMDEDDQADGAGASSSSSSSSDDSDSDEGGEEETPRPRHSQNAAKTPSAAGSPGPSSGGDRPAAGAATPKSCRSGAASPGAPAPAPASAPAPSRPGGGLLPPGARILEYLEGVREANLAKTLERPEPPAGMASPPGRSPHRLPKDQRPKSALAGASKRKRANPRPRPQTQTQAPAEEAPQTAVWDLLDMNSSQATGAAAAAASAPAAASCAPGVYQREPLLTPSGDPWPGSDPPPMGRVRYGGTGDSRDGLWDDPEIVLAASRYAEAQAPVPVFVPEMGDSTKQYNALVRMVFESREAMSWLQNSKLSGQDQNLAQFCQKFIHAPRGHGSFITGSVANPLPHIGDAMAAGNALWALPHAAASVAMSRRYDRTQKSFILQSLRRAYADMAYPRDEAGRPDSLAAVAGCPAQAAAAAASQQQPEAPAPSVRVREAYTRVCAALGPRRKAAAAAAAPGTRAPRPSAFRLRELGDACVLACQAVFEALLRLRGGASAVPGLDPSEIPSPACPPEALCSNPAGLETAALSLYELRDLVERARLLGDSDPTHRLGSDELRLAVRAVLVVARTVAPLVRYNAEGARARASAWTVTQAVFSIPSLVGGMLGEAVSLLAPPTRSQQPSSSSPGGEPFSGSAAAEGSLQTLPPLWPTVPGKQSATVPSSHSQSPQHSQSGGGAGATTATCCRATQTNARSRGQQHQPQKARSPQAAASPAHLSQEAMPGSSSDDRAIHGRPRGKSGKRRSEPLEPAAQAGASASFSSSARGYDPSGPVDSPPAPKRRVATPGHQAPRALGPMPAEGPDRRGGFRRVPRGDCHTPRPSDAACAAYCPPELVAELIDNQLFPEAWRPALTFDPQALATIAARCSGPPARDGARLGELAASGPLRRRAAWMHQIPDPEDVKVVVLYSPLQDEDLLGGLPASRPGGSRREPLWSDLKGGLSALLAALGNRILTKRSHAWAGNWTGAPDVSALNAQGVLLLSTGDLAFTGCVEYLCLRLGSARRKLLVLDAVSTEDWPQDGPAISQYHIYMRAALTPRVACAVRWPGERHLSRAVLTSSTLFGPGLFARAEAAFARLYPDSAPLRLCRSSNVAYTVDTRAGERTRVPLAPREYRQRVLPDYDGCKDMRAQAEGLGFHDPDFEEGAAQSHRAANRWGLGAWLRPVYLACGRRGAGAVEPSELLIPELLSEFCRVALLEPDAEAEPLVLPITEAPRRRAPRVDWEPGFGSRSTSVLHMGATELCLPEPDDELEIDGAGDVELVVEHPGPSPGVAQALRRAPIKIEVVSDDEDGGDWCNPYLS.

4 disordered regions span residues 41 to 295 (AAPD…LPPG), 310 to 371 (LAKT…EEAP), 409 to 442 (REPL…SRDG), and 803 to 1007 (PPTR…HTPR). Pro residues predominate over residues 66–75 (VIPPPSPAPE). Low complexity-rich tracts occupy residues 165 to 193 (PSSA…SSSS) and 201 to 213 (DGAG…SSSS). The span at 214 to 224 (DDSDSDEGGEE) shows a compositional bias: acidic residues. Low complexity predominate over residues 235–272 (AAKTPSAAGSPGPSSGGDRPAAGAATPKSCRSGAASPG). The segment covering 273 to 285 (APAPAPASAPAPS) has biased composition (pro residues). Low complexity-rich tracts occupy residues 807 to 829 (SQQP…AEGS), 849 to 860 (PSSHSQSPQHSQ), and 867 to 877 (ATTATCCRATQ). Polar residues predominate over residues 878–893 (TNARSRGQQHQPQKAR). The span at 920 to 929 (HGRPRGKSGK) shows a compositional bias: basic residues. The span at 938-951 (AAQAGASASFSSSA) shows a compositional bias: low complexity. Residues 988 to 1007 (GPDRRGGFRRVPRGDCHTPR) show a composition bias toward basic and acidic residues.

It belongs to the herpesviridae ICP4 family. In terms of processing, a long stretch of serine residues may be a major site of phosphorylation.

The protein localises to the host nucleus. This IE protein is a multifunctional protein capable of migrating to the nucleus, binding to DNA, trans-activating other viral genes, and autoregulating its own synthesis. This Equine herpesvirus 1 (strain Kentucky A) (EHV-1) protein is Major viral transcription factor (IE).